The primary structure comprises 149 residues: 3-dehydroquinate dehydratase (149 aa).

Tyr-26 acts as the Proton acceptor in catalysis. Asn-77, His-83, and Asp-90 together coordinate substrate. Residue His-103 is the Proton donor of the active site. Substrate is bound by residues 104–105 and Arg-114; that span reads LS.

The protein belongs to the type-II 3-dehydroquinase family. As to quaternary structure, homododecamer.

The catalysed reaction is 3-dehydroquinate = 3-dehydroshikimate + H2O. Its pathway is metabolic intermediate biosynthesis; chorismate biosynthesis; chorismate from D-erythrose 4-phosphate and phosphoenolpyruvate: step 3/7. Its function is as follows. Catalyzes a trans-dehydration via an enolate intermediate. The protein is 3-dehydroquinate dehydratase of Aliivibrio fischeri (strain MJ11) (Vibrio fischeri).